Reading from the N-terminus, the 200-residue chain is UPF0637 protein LCK_01372 (200 aa).

Belongs to the UPF0637 family.

This Leuconostoc citreum (strain KM20) protein is UPF0637 protein LCK_01372.